Here is a 123-residue protein sequence, read N- to C-terminus: Protein lgg-1 (123 aa).

Gly-116 is lipidated: Phosphatidylethanolamine amidated glycine. Positions 117-123 are cleaved as a propeptide — removed in mature form; it reads GEVEKKE.

This sequence belongs to the ATG8 family. In terms of assembly, interacts with sepa-1 (via the LIR motifs); the interaction is direct. Interacts with allo-1 (via the LIR motif). Interacts with sqst-1 (via the LIR motifs); the interaction is direct. Both lipidated and unlipidated forms interact with epg-7 (via the LIR motif); the interaction is direct. Interacts with epg-2 (via the LIR motifs); the interaction is direct. Interacts with atg-13; the interaction is direct. Interacts with unc-51 (via the LIR motif); the interaction is direct. Interacts with atg-7; the interaction is direct. Interacts with atg-3. The interaction with atg-7 and atg-3 may be required for the lipidation of lgg-1. Cleaved by atg-4.1 and/or atg-4.2, after Gly-116 to form a thioester bond with 'Cys-523' of atg-7 (E1-like activating enzyme) before being transferred to 'Cys-255' of atg-3 (E2 conjugating enzyme), in order to be amidated with phosphatidylethanolamine. This lipid modification anchors lgg-1 to membranes and can be reversed by atg-4.2, releasing soluble lgg-1. C-terminal cleavage is essential for autophagosome initiation and biogenesis. Lipidation is not essential for autophagy or development but the lipidated form is involved in cargo recognition and autophagosome biogenesis. Lipidation regulates lgg-2-positive autophagosome formation. In terms of tissue distribution, expressed in PLML touch receptor neuron and in the ventral nerve cord. Expressed in AIY interneurons.

The protein resides in the preautophagosomal structure. Its subcellular location is the cytoplasmic vesicle. It is found in the autophagosome. The protein localises to the autophagosome membrane. It localises to the lysosome lumen. The protein resides in the mitochondrion. Its subcellular location is the cytoplasm. It is found in the phagosome membrane. The protein localises to the cell membrane. It localises to the cell projection. The protein resides in the dendrite. Its subcellular location is the perikaryon. Functionally, ubiquitin-like modifier involved in the formation of autophagosomal vacuoles (autophagosomes). When lipidated mediates tethering between adjacent membranes and stimulates membrane fusion during autophagy. Recruits lipidated-lgg-2 to maturing autophagosomes. Acts in the aggrephagy pathway, which is the macroautophagic degradation of ubiquitinated protein aggregates, and preferentially interacts with autophagy proteins and substrates containing LIR motifs to mediate autophagosome formation and protein aggregate degradation. In particular, binds to components of the unc-51-atg-13 complex to regulate autophagosome formation and cargo sequestration. Required for the degradation of specific sepa-1- and sqst-1-containing protein aggregates during embryogenesis. Involved in allophagy, which is an autophagic process in which paternal mitochondria and organelles are degraded during fertilization, and moreover is required for the formation of lgg-2-positive allophagic autophagosomes in embryos. Involved in the clearance of apoptotic cells by promoting the delivery of engulfed apoptotic cells to the lysosome. Plays a role in the distribution and clearance of germ cell specific P-granules from somatic cells. Also plays a role in the autophagy-mediated degradation of ribosomal RNA and ribosomal proteins in lysosomes. Involved in xenophagy, the autophagy-mediated degradation of pathogens and pathogen products, such as toxins. Required for normal survival when exposed to pathogenic bacteria S.typhimurium probably by promoting autophagic degradation of intracellular S.typhimurium. Also plays a role in membrane-pore repair. Plays a role in mitophagy. Essential for dauer development and longevity, including longevity in response to moderate, short-term heat shock, also known as a hormetic heat shock. In Caenorhabditis elegans, this protein is Protein lgg-1.